The primary structure comprises 223 residues: DNA replication complex GINS protein SLD5 (223 aa).

Residue Met-1 is modified to N-acetylmethionine. At Thr-2 the chain carries N-acetylthreonine; in DNA replication complex GINS protein SLD5, N-terminally processed. Phosphoserine occurs at positions 12 and 16. Residues 166–223 form an important for GINS complex assembly region; that stretch reads DLDSYVFLRVKERQENILVEPEADEQRDYVIDLEVGSQHLIRYKTIAPLVASGAVQLI.

Belongs to the GINS4/SLD5 family. Component of the CMG helicase complex, a hexameric ring of related MCM2-7 subunits stabilized by CDC45 and the tetrameric GINS complex. Associated with ORC2. Interacts with HELB. Highly abundant in testis. Weakly expressed in thymus and bone marrow.

The protein localises to the nucleus. It is found in the chromosome. The protein resides in the cytoplasm. In terms of biological role, required for initiation of chromosomal DNA replication. Core component of CDC45-MCM-GINS (CMG) helicase, the molecular machine that unwinds template DNA during replication, and around which the replisome is built. The protein is DNA replication complex GINS protein SLD5 (Gins4) of Mus musculus (Mouse).